The following is a 247-amino-acid chain: MRYPMSKLAYHRVLLKLSGEALMGSADYGIDPKVINRLAGEVIEAQNAGAELALVIGGGNIFRGAGLAAKGMDRVTGDHMGMLATIINALAMQDALEKLGTKVRVMSAIKINNVCEDFIRRRAIRHLEKSRITIFAAGTGNPFFTTDSGAALRAIEIGADLLLKATKVDGIYNKDPQKHCDAVKYSTLSYDEVISQNLEVMDTAAFALARDSNLPLRIFDIEQPGVLLRILHGEEIGTLVKERNSKS.

An ATP-binding site is contributed by 16–19 (KLSG). Glycine 58 contributes to the UMP binding site. Residues glycine 59 and arginine 63 each coordinate ATP. UMP contacts are provided by residues aspartate 78 and 139–146 (TGNPFFTT). ATP-binding residues include threonine 166, tyrosine 172, and aspartate 175.

The protein belongs to the UMP kinase family. As to quaternary structure, homohexamer.

It is found in the cytoplasm. The catalysed reaction is UMP + ATP = UDP + ADP. The protein operates within pyrimidine metabolism; CTP biosynthesis via de novo pathway; UDP from UMP (UMPK route): step 1/1. Inhibited by UTP. Its function is as follows. Catalyzes the reversible phosphorylation of UMP to UDP. This chain is Uridylate kinase, found in Xylella fastidiosa (strain 9a5c).